Here is a 326-residue protein sequence, read N- to C-terminus: Ribose-phosphate pyrophosphokinase (326 aa).

Residues Asn45–Glu47 and Arg104–Gln105 each bind ATP. Mg(2+)-binding residues include His138 and Asp178. The active site involves Lys202. D-ribose 5-phosphate is bound by residues Arg204, Asp230, and Asp234–Thr238.

The protein belongs to the ribose-phosphate pyrophosphokinase family. Class I subfamily. Homohexamer. Requires Mg(2+) as cofactor.

It is found in the cytoplasm. It catalyses the reaction D-ribose 5-phosphate + ATP = 5-phospho-alpha-D-ribose 1-diphosphate + AMP + H(+). It functions in the pathway metabolic intermediate biosynthesis; 5-phospho-alpha-D-ribose 1-diphosphate biosynthesis; 5-phospho-alpha-D-ribose 1-diphosphate from D-ribose 5-phosphate (route I): step 1/1. In terms of biological role, involved in the biosynthesis of the central metabolite phospho-alpha-D-ribosyl-1-pyrophosphate (PRPP) via the transfer of pyrophosphoryl group from ATP to 1-hydroxyl of ribose-5-phosphate (Rib-5-P). In Mycobacterium bovis (strain ATCC BAA-935 / AF2122/97), this protein is Ribose-phosphate pyrophosphokinase.